The primary structure comprises 148 residues: Calcium-regulated heat stable protein 1 (148 aa).

Residues 1-12 (MSSEPPPPPLQP) are compositionally biased toward pro residues. Positions 1 to 47 (MSSEPPPPPLQPPTHQTSVGLLDTPRTRDRSPSPLRGNVVPSPLPTR) are disordered. Position 2 is an N-acetylserine (S2). S31, S33, and S42 each carry phosphoserine. At T46 the chain carries Phosphothreonine. Phosphoserine occurs at positions 53 and 59. Residues 63 to 130 (VYKGVCKCFC…KLQAVEVVIT (68 aa)) enclose the CSD domain. S147 is modified (phosphoserine).

As to quaternary structure, homodimer. Interacts with STYX. In terms of processing, can be phosphorylated by DYRK2 (in vitro). Dephosphorylated by calcineurin in a Ca(2+) dependent manner.

It localises to the cytoplasm. The protein resides in the P-body. Its subcellular location is the cytoplasmic granule. Functionally, binds mRNA and regulates the stability of target mRNA. The sequence is that of Calcium-regulated heat stable protein 1 (Carhsp1) from Mus musculus (Mouse).